A 70-amino-acid chain; its full sequence is Large ribosomal subunit protein uL29 (70 aa).

The protein belongs to the universal ribosomal protein uL29 family.

This Rickettsia bellii (strain OSU 85-389) protein is Large ribosomal subunit protein uL29.